The following is a 192-amino-acid chain: N-terminal acetyltransferase A complex catalytic subunit NAA10 (192 aa).

Residues 2 to 152 enclose the N-acetyltransferase domain; it reads VCIRRATVDD…DAYDMRKNLK (151 aa).

It belongs to the acetyltransferase family. ARD1 subfamily. In terms of assembly, part of the NatA complex. Interacts with NAA15. In terms of tissue distribution, expressed in leaves, roots, shoots and flowers.

It carries out the reaction N-terminal glycyl-[protein] + acetyl-CoA = N-terminal N(alpha)-acetylglycyl-[protein] + CoA + H(+). It catalyses the reaction N-terminal L-alanyl-[protein] + acetyl-CoA = N-terminal N(alpha)-acetyl-L-alanyl-[protein] + CoA + H(+). The enzyme catalyses N-terminal L-seryl-[protein] + acetyl-CoA = N-terminal N(alpha)-acetyl-L-seryl-[protein] + CoA + H(+). The catalysed reaction is N-terminal L-valyl-[protein] + acetyl-CoA = N-terminal N(alpha)-acetyl-L-valyl-[protein] + CoA + H(+). It carries out the reaction N-terminal L-cysteinyl-[protein] + acetyl-CoA = N-terminal N(alpha)-acetyl-L-cysteinyl-[protein] + CoA + H(+). It catalyses the reaction N-terminal L-threonyl-[protein] + acetyl-CoA = N-terminal N(alpha)-acetyl-L-threonyl-[protein] + CoA + H(+). Functionally, catalytic subunit of the NatA N-alpha-acetyltransferase complex. Required for male gametocyte development, embryogenesis, suspensor development and the formation of the quiescent center (QC) in the root meristem. Involved in plant immunity through the regulation of SNC1 and RPM1 stability. The sequence is that of N-terminal acetyltransferase A complex catalytic subunit NAA10 from Arabidopsis thaliana (Mouse-ear cress).